Here is a 317-residue protein sequence, read N- to C-terminus: Transaldolase (317 aa).

K132 serves as the catalytic Schiff-base intermediate with substrate.

The protein belongs to the transaldolase family. Type 1 subfamily. In terms of assembly, homodimer.

It is found in the cytoplasm. It carries out the reaction D-sedoheptulose 7-phosphate + D-glyceraldehyde 3-phosphate = D-erythrose 4-phosphate + beta-D-fructose 6-phosphate. It functions in the pathway carbohydrate degradation; pentose phosphate pathway; D-glyceraldehyde 3-phosphate and beta-D-fructose 6-phosphate from D-ribose 5-phosphate and D-xylulose 5-phosphate (non-oxidative stage): step 2/3. In terms of biological role, transaldolase is important for the balance of metabolites in the pentose-phosphate pathway. In Shewanella amazonensis (strain ATCC BAA-1098 / SB2B), this protein is Transaldolase.